The chain runs to 207 residues: Protein FMP32, mitochondrial (207 aa).

The stretch at 100–136 (ADRSEFHNIQNEYESVKNDLEKLRNKLREEITKTNAG) forms a coiled coil. A helical transmembrane segment spans residues 184–206 (VMQWLIGVCTGTFALVLAYMRLL).

The protein belongs to the CCDC90 family.

It localises to the mitochondrion. Its subcellular location is the membrane. In Saccharomyces cerevisiae (strain ATCC 204508 / S288c) (Baker's yeast), this protein is Protein FMP32, mitochondrial (FMP32).